A 283-amino-acid polypeptide reads, in one-letter code: Bifunctional protein FolD (283 aa).

NADP(+) contacts are provided by residues glycine 165 to serine 167 and serine 190.

It belongs to the tetrahydrofolate dehydrogenase/cyclohydrolase family. As to quaternary structure, homodimer.

The catalysed reaction is (6R)-5,10-methylene-5,6,7,8-tetrahydrofolate + NADP(+) = (6R)-5,10-methenyltetrahydrofolate + NADPH. It carries out the reaction (6R)-5,10-methenyltetrahydrofolate + H2O = (6R)-10-formyltetrahydrofolate + H(+). It functions in the pathway one-carbon metabolism; tetrahydrofolate interconversion. Its function is as follows. Catalyzes the oxidation of 5,10-methylenetetrahydrofolate to 5,10-methenyltetrahydrofolate and then the hydrolysis of 5,10-methenyltetrahydrofolate to 10-formyltetrahydrofolate. The polypeptide is Bifunctional protein FolD (Paracidovorax citrulli (strain AAC00-1) (Acidovorax citrulli)).